Here is a 58-residue protein sequence, read N- to C-terminus: Ribosome biogenesis protein Nop10 (58 aa).

It belongs to the NOP10 family.

In terms of biological role, involved in ribosome biogenesis; more specifically in 18S rRNA pseudouridylation and in cleavage of pre-rRNA. The polypeptide is Ribosome biogenesis protein Nop10 (Thermococcus onnurineus (strain NA1)).